We begin with the raw amino-acid sequence, 585 residues long: Cytochrome P450 monooxygenase AOL_s00215g278 (585 aa).

Cys518 provides a ligand contact to heme.

The protein belongs to the cytochrome P450 family. Heme is required as a cofactor.

It functions in the pathway secondary metabolite biosynthesis; terpenoid biosynthesis. In terms of biological role, cytochrome P450 monooxygenase; part of the gene cluster that mediates the biosynthesis of sesquiterpenyl epoxy-cyclohexenoids (SECs) such as anthrobotrisins and arthrosporols, metabolites that possess a novel hybrid carbon skeleton consisting of a polyketide-derived epoxycyclohexenol combined with a terpenoid-derived monocyclic sesquiterpenol substructure (PKS-PTS hybrid). The SEC pathway plays an important role for fungal soil colonization via decreasing fungal nematode-capturing ability. Within the pathway, the cytochrome P450 monooxygenase AOL_s00215g278 plays a role in the oxygenation of the phenol moiety, most likely in the epoxy formation. The pathway begins with the biosynthesis of 6-methylsalicylic acid (6-MSA), the first precursor of the polyketide-derived epoxycyclohexenol in arthrosporols, by the polyketide synthase (PKS) AOL_s00215g283 via condensation of 1 acetate and 3 malonate units. The 6-methylsalicylic acid decarboxylase AOL_s00215g281 then catalyzes the decarboxylation of 6-methylsalicylic acid to yield m-cresol. The cytochrome P450 monooxygenase AOL_s00215g282 further oxidizes m-cresol to yield toluquinol. With the assistance of the oxidoreductase AOL_s00215g277, the polyprenyl transferase AOL_s00215g276 catalyzes the farnesylation of toluquinol to produce farnesyl hydroquinone, the hybrid precursor for biosynthesis of SECs. Farnesyl hydroquinone undergoes epoxidation and then subsequent dehydrogenation to form farnesyl epoxy-quinone, the first and simplest SEC. The cytochrome P450 monooxygenase AOL_s00215g278 and the FAD-dependent monooxygenase AOL_s00215g279 might be involved in the oxygenation of the phenol moiety, most likely in the epoxy formation. The cytochrome P450 monooxygenases AOL_s00215g274 and AOL_s00215g280 are involved in specific regional ketone reductions at respectively C-4 and C-1 of farnesyl epoxy-quinone PubMed:33823587. This Arthrobotrys oligospora (strain ATCC 24927 / CBS 115.81 / DSM 1491) (Nematode-trapping fungus) protein is Cytochrome P450 monooxygenase AOL_s00215g278.